A 425-amino-acid chain; its full sequence is Voltage-dependent calcium channel gamma-8 subunit (425 aa).

The next 4 membrane-spanning stretches (helical) occupy residues 19 to 39, 129 to 149, 158 to 178, and 208 to 228; these read VQVL…TIAI, SIFP…VAAS, IILG…IGVI, and FGGL…NIYI. Phosphoserine occurs at positions 252 and 255. The tract at residues 272–304 is disordered; sequence RRSRSSSRSSEPSPSRDASPGGPGGPGFASTDI. A compositionally biased stretch (low complexity) spans 277-287; sequence SSRSSEPSPSR. A helical transmembrane segment spans residues 318–338; it reads VAAGLAGAGGGGGGAVGAFGG. Residues 343 to 354 show a composition bias toward gly residues; that stretch reads AGGGGGGGGGAG. 2 disordered regions span residues 343-365 and 377-425; these read AGGG…ASGF and GGGV…TTPV. The span at 387–401 shows a compositional bias: pro residues; it reads PPAPPAPAPPAPSAP. Residues 412–425 are compositionally biased toward polar residues; sequence ASNTNTLNRKTTPV.

This sequence belongs to the PMP-22/EMP/MP20 family. CACNG subfamily. In terms of assembly, interacts with CACNA1C. Identified in a complex with the L-type calcium channel subunits CACNA1C, CACNA2D1 and either CACNB1 or CACNB2. Acts as an auxiliary subunit for AMPA-selective glutamate receptors (AMPARs). Found in a complex with GRIA1, GRIA2, GRIA3, GRIA4, CNIH2, CNIH3, CACNG2, CACNG3, CACNG4, CACNG5 and CACNG7. Interacts with CNIH2. Found in a complex with GRIA1, GRIA2, GRIA3, GRIA4, DLG4 and CNIH2. In terms of processing, palmitoylated. Probably palmitoylated by ZDHHC3 and ZDHHC7. Detected in heart left ventricle.

The protein localises to the cell membrane. It is found in the postsynaptic density membrane. Its function is as follows. Regulates the activity of L-type calcium channels that contain CACNA1C as pore-forming subunit. Regulates the trafficking and gating properties of AMPA-selective glutamate receptors (AMPARs). Promotes their targeting to the cell membrane and synapses and modulates their gating properties by slowing their rates of activation, deactivation and desensitization and by mediating their resensitization. Does not show subunit-specific AMPA receptor regulation and regulates all AMPAR subunits. In Homo sapiens (Human), this protein is Voltage-dependent calcium channel gamma-8 subunit.